A 413-amino-acid polypeptide reads, in one-letter code: Multifunctional CCA protein (413 aa).

Positions 8 and 11 each coordinate ATP. CTP contacts are provided by Gly-8 and Arg-11. Mg(2+) is bound by residues Asp-21 and Asp-23. ATP is bound by residues Arg-91, Arg-143, and Arg-146. 3 residues coordinate CTP: Arg-91, Arg-143, and Arg-146. The HD domain maps to 232–333 (TGVHVMMVVD…VRFFERSDAL (102 aa)).

Belongs to the tRNA nucleotidyltransferase/poly(A) polymerase family. Bacterial CCA-adding enzyme type 1 subfamily. As to quaternary structure, monomer. Can also form homodimers and oligomers. Mg(2+) is required as a cofactor. Requires Ni(2+) as cofactor.

It carries out the reaction a tRNA precursor + 2 CTP + ATP = a tRNA with a 3' CCA end + 3 diphosphate. The catalysed reaction is a tRNA with a 3' CCA end + 2 CTP + ATP = a tRNA with a 3' CCACCA end + 3 diphosphate. Its function is as follows. Catalyzes the addition and repair of the essential 3'-terminal CCA sequence in tRNAs without using a nucleic acid template. Adds these three nucleotides in the order of C, C, and A to the tRNA nucleotide-73, using CTP and ATP as substrates and producing inorganic pyrophosphate. tRNA 3'-terminal CCA addition is required both for tRNA processing and repair. Also involved in tRNA surveillance by mediating tandem CCA addition to generate a CCACCA at the 3' terminus of unstable tRNAs. While stable tRNAs receive only 3'-terminal CCA, unstable tRNAs are marked with CCACCA and rapidly degraded. This is Multifunctional CCA protein from Burkholderia ambifaria (strain ATCC BAA-244 / DSM 16087 / CCUG 44356 / LMG 19182 / AMMD) (Burkholderia cepacia (strain AMMD)).